The sequence spans 538 residues: Nucleobase-ascorbate transporter 7 (538 aa).

Residues 1 to 11 (MAGGGGGGGGV) are compositionally biased toward gly residues. The tract at residues 1-20 (MAGGGGGGGGVAPPLKHDGL) is disordered. The next 12 helical transmembrane spans lie at 45–65 (AILL…LIPT), 81–101 (MVQT…FFGT), 103–123 (LPAV…IILA), 143–163 (IQGA…SGLW), 166–186 (VVRL…GFGL), 191–211 (FPLL…LLLF), 229–249 (FAVI…TVGG), 295–315 (FAMM…YIVV), 372–394 (VVQI…AIFA), 398–420 (APVV…LSLL), 432–452 (FILG…NQYT), and 471–491 (INVP…FLDV).

The protein belongs to the nucleobase:cation symporter-2 (NCS2) (TC 2.A.40) family. In terms of tissue distribution, expressed exclusively in ovules.

Its subcellular location is the cell membrane. This chain is Nucleobase-ascorbate transporter 7 (NAT7), found in Arabidopsis thaliana (Mouse-ear cress).